The chain runs to 467 residues: DNA polymerase IV (467 aa).

Positions 5–187 (VLHIDMDAFF…LPVGALWGVG (183 aa)) constitute a UmuC domain. Mg(2+) contacts are provided by Asp-9 and Asp-104. Glu-105 is an active-site residue. Disordered stretches follow at residues 364–386 (PDTD…VEAP) and 428–449 (TKGR…DPLD).

It belongs to the DNA polymerase type-Y family. As to quaternary structure, monomer. The cofactor is Mg(2+).

It is found in the cytoplasm. It catalyses the reaction DNA(n) + a 2'-deoxyribonucleoside 5'-triphosphate = DNA(n+1) + diphosphate. Functionally, poorly processive, error-prone DNA polymerase involved in untargeted mutagenesis. Copies undamaged DNA at stalled replication forks, which arise in vivo from mismatched or misaligned primer ends. These misaligned primers can be extended by PolIV. Exhibits no 3'-5' exonuclease (proofreading) activity. May be involved in translesional synthesis, in conjunction with the beta clamp from PolIII. This Corynebacterium glutamicum (strain R) protein is DNA polymerase IV.